A 310-amino-acid chain; its full sequence is Collagen-like protein V6 (310 aa).

Residues 1–41 (MSLSTLFSPNTYNINSKSQTLNNLPSNPTSQTNTLWSNNAY) are compositionally biased toward polar residues. A disordered region spans residues 1–183 (MSLSTLFSPN…GDPGAKGDPG (183 aa)). Collagen-like domains are found at residues 61 to 119 (GQKG…KGQA) and 123 to 182 (GLKG…KGDP). A compositionally biased stretch (basic and acidic residues) spans 92 to 101 (SGDKGDKGDS). Asn227 and Asn264 each carry an N-linked (GlcNAc...) asparagine; by host glycan.

The protein belongs to the sputnik virus V6 family.

In Sputnik virophage, this protein is Collagen-like protein V6.